The sequence spans 123 residues: Integration host factor subunit alpha (123 aa).

The interval 97–123 is disordered; sequence NANGTASSMSSSANAAAGDKSESASGT. Residues 102 to 113 show a composition bias toward low complexity; that stretch reads ASSMSSSANAAA.

Belongs to the bacterial histone-like protein family. As to quaternary structure, heterodimer of an alpha and a beta chain.

Functionally, this protein is one of the two subunits of integration host factor, a specific DNA-binding protein that functions in genetic recombination as well as in transcriptional and translational control. In Rhodopseudomonas palustris (strain HaA2), this protein is Integration host factor subunit alpha.